Reading from the N-terminus, the 317-residue chain is Protoheme IX farnesyltransferase (317 aa).

A run of 9 helical transmembrane segments spans residues Val39–Leu58, Leu62–Tyr84, Ile100–Gly120, Leu123–Phe143, Ile160–Gly180, Leu184–Leu204, Ile233–Thr253, Val256–Leu276, and Ala293–Val313.

Belongs to the UbiA prenyltransferase family. Protoheme IX farnesyltransferase subfamily.

Its subcellular location is the cell inner membrane. It catalyses the reaction heme b + (2E,6E)-farnesyl diphosphate + H2O = Fe(II)-heme o + diphosphate. The protein operates within porphyrin-containing compound metabolism; heme O biosynthesis; heme O from protoheme: step 1/1. Its function is as follows. Converts heme B (protoheme IX) to heme O by substitution of the vinyl group on carbon 2 of heme B porphyrin ring with a hydroxyethyl farnesyl side group. The chain is Protoheme IX farnesyltransferase from Granulibacter bethesdensis (strain ATCC BAA-1260 / CGDNIH1).